The primary structure comprises 572 residues: Proline--tRNA ligase (572 aa).

Belongs to the class-II aminoacyl-tRNA synthetase family. ProS type 1 subfamily. Homodimer.

Its subcellular location is the cytoplasm. It catalyses the reaction tRNA(Pro) + L-proline + ATP = L-prolyl-tRNA(Pro) + AMP + diphosphate. Catalyzes the attachment of proline to tRNA(Pro) in a two-step reaction: proline is first activated by ATP to form Pro-AMP and then transferred to the acceptor end of tRNA(Pro). As ProRS can inadvertently accommodate and process non-cognate amino acids such as alanine and cysteine, to avoid such errors it has two additional distinct editing activities against alanine. One activity is designated as 'pretransfer' editing and involves the tRNA(Pro)-independent hydrolysis of activated Ala-AMP. The other activity is designated 'posttransfer' editing and involves deacylation of mischarged Ala-tRNA(Pro). The misacylated Cys-tRNA(Pro) is not edited by ProRS. This is Proline--tRNA ligase from Salmonella schwarzengrund (strain CVM19633).